The primary structure comprises 252 residues: Uridylate kinase (252 aa).

24–27 lines the ATP pocket; sequence KLSG. Residues 32–37 are involved in allosteric activation by GTP; sequence GEEGFG. G66 is a binding site for UMP. Positions 67 and 71 each coordinate ATP. Residues D86 and 147-154 contribute to the UMP site; that span reads TGNPFFTT. Positions 174, 180, and 183 each coordinate ATP.

The protein belongs to the UMP kinase family. As to quaternary structure, homohexamer.

The protein resides in the cytoplasm. The enzyme catalyses UMP + ATP = UDP + ADP. It participates in pyrimidine metabolism; CTP biosynthesis via de novo pathway; UDP from UMP (UMPK route): step 1/1. Allosterically activated by GTP. Inhibited by UTP. Functionally, catalyzes the reversible phosphorylation of UMP to UDP. This chain is Uridylate kinase, found in Alcanivorax borkumensis (strain ATCC 700651 / DSM 11573 / NCIMB 13689 / SK2).